We begin with the raw amino-acid sequence, 85 residues long: METVISFTAIAVAIMIGLAALGTGIGFAILGGKFLEASARQPELAPALQTKMFIVAGLLDAISMIAVGVALFFVFANPFLGQLAG.

Helical transmembrane passes span 10-30 (IAVA…FAIL) and 53-73 (FIVA…ALFF).

The protein belongs to the ATPase C chain family. As to quaternary structure, F-type ATPases have 2 components, F(1) - the catalytic core - and F(0) - the membrane proton channel. F(1) has five subunits: alpha(3), beta(3), gamma(1), delta(1), epsilon(1). F(0) has three main subunits: a(1), b(2) and c(10-14). The alpha and beta chains form an alternating ring which encloses part of the gamma chain. F(1) is attached to F(0) by a central stalk formed by the gamma and epsilon chains, while a peripheral stalk is formed by the delta and b chains.

It is found in the cell inner membrane. Functionally, f(1)F(0) ATP synthase produces ATP from ADP in the presence of a proton or sodium gradient. F-type ATPases consist of two structural domains, F(1) containing the extramembraneous catalytic core and F(0) containing the membrane proton channel, linked together by a central stalk and a peripheral stalk. During catalysis, ATP synthesis in the catalytic domain of F(1) is coupled via a rotary mechanism of the central stalk subunits to proton translocation. In terms of biological role, key component of the F(0) channel; it plays a direct role in translocation across the membrane. A homomeric c-ring of between 10-14 subunits forms the central stalk rotor element with the F(1) delta and epsilon subunits. This is ATP synthase subunit c from Shewanella halifaxensis (strain HAW-EB4).